Reading from the N-terminus, the 530-residue chain is uncharacterized protein (530 aa).

It belongs to the mimivirus R640 family.

This is an uncharacterized protein from Acanthamoeba polyphaga (Amoeba).